Reading from the N-terminus, the 84-residue chain is MKTPILFVVVVAVLIVTDSAEGFKGKANSFLKPLQRRGLEEECCQETCSYHEIWENCKKLCSDELHKMFVEICQPPTEKVPERD.

The signal sequence occupies residues methionine 1–glycine 22. The propeptide occupies phenylalanine 23–arginine 37. 3 disulfide bridges follow: cysteine 43/cysteine 48, cysteine 44/cysteine 73, and cysteine 57/cysteine 61.

It belongs to the insulin family.

It localises to the secreted. Its function is as follows. Insulin decreases blood glucose concentration. May have evolved to activate insulin receptors (INSR) in vertebrates. Molecular docking studies reveals unique interaction with the human insulin receptor. In vivo, insulin-like peptide injection reduces blood glucose levels in two models of zebrafish diabetes (streptozotocin- and glucose-induced). Also shorter swimming distance of zebrafish larvae, an effect which is not observed with human insulin. In Exaiptasia diaphana (Tropical sea anemone), this protein is Insulin-like peptide 05.